Reading from the N-terminus, the 289-residue chain is 33 kDa chaperonin (289 aa).

2 cysteine pairs are disulfide-bonded: Cys237–Cys239 and Cys270–Cys273.

This sequence belongs to the HSP33 family. Post-translationally, under oxidizing conditions two disulfide bonds are formed involving the reactive cysteines. Under reducing conditions zinc is bound to the reactive cysteines and the protein is inactive.

Its subcellular location is the cytoplasm. Its function is as follows. Redox regulated molecular chaperone. Protects both thermally unfolding and oxidatively damaged proteins from irreversible aggregation. Plays an important role in the bacterial defense system toward oxidative stress. The sequence is that of 33 kDa chaperonin from Oceanobacillus iheyensis (strain DSM 14371 / CIP 107618 / JCM 11309 / KCTC 3954 / HTE831).